Here is a 524-residue protein sequence, read N- to C-terminus: Anthranilate synthase component 1 (524 aa).

L-tryptophan-binding positions include Ser55 and 297–299; that span reads PYM. Position 332–333 (332–333) interacts with chorismate; it reads GT. Glu359 provides a ligand contact to Mg(2+). Chorismate is bound by residues Tyr447, Arg467, 485-487, and Gly487; that span reads GAG. Glu500 contributes to the Mg(2+) binding site.

It belongs to the anthranilate synthase component I family. As to quaternary structure, heterotetramer consisting of two non-identical subunits: a beta subunit (TrpG) and a large alpha subunit (TrpE). The cofactor is Mg(2+).

It catalyses the reaction chorismate + L-glutamine = anthranilate + pyruvate + L-glutamate + H(+). It functions in the pathway amino-acid biosynthesis; L-tryptophan biosynthesis; L-tryptophan from chorismate: step 1/5. Its activity is regulated as follows. Feedback inhibited by tryptophan. Part of a heterotetrameric complex that catalyzes the two-step biosynthesis of anthranilate, an intermediate in the biosynthesis of L-tryptophan. In the first step, the glutamine-binding beta subunit (TrpG) of anthranilate synthase (AS) provides the glutamine amidotransferase activity which generates ammonia as a substrate that, along with chorismate, is used in the second step, catalyzed by the large alpha subunit of AS (TrpE) to produce anthranilate. In the absence of TrpG, TrpE can synthesize anthranilate directly from chorismate and high concentrations of ammonia. The polypeptide is Anthranilate synthase component 1 (trpE) (Haloferax volcanii (strain ATCC 29605 / DSM 3757 / JCM 8879 / NBRC 14742 / NCIMB 2012 / VKM B-1768 / DS2) (Halobacterium volcanii)).